We begin with the raw amino-acid sequence, 138 residues long: Biopolymer transport protein exbD1 (138 aa).

The Cytoplasmic segment spans residues 1–16 (MIKSSAKHNDFGLTPD). A helical transmembrane segment spans residues 17–37 (LTPLLDIIFIVMVFLLLTASV). Residues 38–138 (RLESLEVALP…TQLLTEPSHS (101 aa)) lie on the Periplasmic side of the membrane.

Belongs to the ExbD/TolR family. As to quaternary structure, the accessory proteins ExbB and ExbD seem to form a complex with TonB.

Its subcellular location is the cell inner membrane. Its function is as follows. Involved in the TonB-dependent energy-dependent transport of various receptor-bound substrates. The polypeptide is Biopolymer transport protein exbD1 (exbD1) (Vibrio cholerae serotype O1 (strain ATCC 39315 / El Tor Inaba N16961)).